A 531-amino-acid chain; its full sequence is GTPase Obg (531 aa).

The Obg domain maps to 2–159; that stretch reads ASFVDRVIVH…QEVELELKSI (158 aa). The 182-residue stretch at 160–341 folds into the OBG-type G domain; it reads ADIALVGFPS…LSFAMAALVS (182 aa). GTP contacts are provided by residues 166 to 173, 191 to 195, 212 to 215, 293 to 296, and 322 to 324; these read GFPSAGKS, FTTLV, DVPG, NKVD, and STA. Mg(2+) contacts are provided by S173 and T193. The disordered stretch occupies residues 346 to 365; that stretch reads QEEQREQQRQTVPVLQPEPV. The 86-residue stretch at 368-453 folds into the OCT domain; the sequence is RRGRDRREFV…ENGVVFDWEP (86 aa). The disordered stretch occupies residues 459-531; it reads AELLGGPRGS…TSETKETNEK (73 aa). 2 stretches are compositionally biased toward basic and acidic residues: residues 468-507 and 514-531; these read SDLR…ERRA and VDAR…TNEK.

The protein belongs to the TRAFAC class OBG-HflX-like GTPase superfamily. OBG GTPase family. As to quaternary structure, monomer. Mg(2+) is required as a cofactor.

It is found in the cytoplasm. Its function is as follows. An essential GTPase which binds GTP, GDP and possibly (p)ppGpp with moderate affinity, with high nucleotide exchange rates and a fairly low GTP hydrolysis rate. Plays a role in control of the cell cycle, stress response, ribosome biogenesis and in those bacteria that undergo differentiation, in morphogenesis control. This Kocuria rhizophila (strain ATCC 9341 / DSM 348 / NBRC 103217 / DC2201) protein is GTPase Obg.